We begin with the raw amino-acid sequence, 257 residues long: MLTKRIIPCLDVKDDVVVKGVKFRNHRIIGDIIELAQKYSDAGADELVFYDIGASPDNKLLSIKWIQEIAKKINIPFCVAGGIKSVENARAILNEGADKISVNSAALARPDLIDELVYEFGSQCVVVGIDSKFIDGEFKVCQYTGSADKTVQTLLDPVSWAKEVESRGAGEIVLNCMNQDGVKGGYDLEHLREVQSNVSIPVIASGGAGEIQHFIDVFKYTEIDGALAASVFHDDIIAIPELKQELFKNNIPTRIVK.

Catalysis depends on residues Asp11 and Asp130.

This sequence belongs to the HisA/HisF family. As to quaternary structure, heterodimer of HisH and HisF.

It is found in the cytoplasm. It carries out the reaction 5-[(5-phospho-1-deoxy-D-ribulos-1-ylimino)methylamino]-1-(5-phospho-beta-D-ribosyl)imidazole-4-carboxamide + L-glutamine = D-erythro-1-(imidazol-4-yl)glycerol 3-phosphate + 5-amino-1-(5-phospho-beta-D-ribosyl)imidazole-4-carboxamide + L-glutamate + H(+). It participates in amino-acid biosynthesis; L-histidine biosynthesis; L-histidine from 5-phospho-alpha-D-ribose 1-diphosphate: step 5/9. Functionally, IGPS catalyzes the conversion of PRFAR and glutamine to IGP, AICAR and glutamate. The HisF subunit catalyzes the cyclization activity that produces IGP and AICAR from PRFAR using the ammonia provided by the HisH subunit. In Francisella philomiragia subsp. philomiragia (strain ATCC 25017 / CCUG 19701 / FSC 153 / O#319-036), this protein is Imidazole glycerol phosphate synthase subunit HisF.